The sequence spans 804 residues: E3 UFM1-protein ligase 1 homolog (804 aa).

N-acetylmethionine is present on Met1. Residues 397-483 (IHPSSKSSES…VKAQESNNII (87 aa)) are disordered. The segment covering 400–409 (SSKSSESTES) has biased composition (low complexity). The span at 463–475 (LDSKAGGKKESVK) shows a compositional bias: basic and acidic residues.

It belongs to the UFL1 family.

In terms of biological role, E3 UFM1-protein ligase that mediates ufmylation of target proteins. The polypeptide is E3 UFM1-protein ligase 1 homolog (Arabidopsis thaliana (Mouse-ear cress)).